An 802-amino-acid chain; its full sequence is Post-transcriptional regulator mkt1 (802 aa).

Phosphoserine occurs at positions 227, 228, and 230.

It belongs to the XPG/RAD2 endonuclease family. Interacts with pab1 binding protein ath1.

Functionally, involved in post-transcriptional regulation of gene expression by 3'-UTR-mediated RNA regulation. Promotes interactions between mRNA and poly(A)-binding protein. Binds the 3' UTR of mRNAs, centromeric transcripts and antisense-rDNA. Required for the establishment but not the maintenance of heterochromatin at pericentromeres, and for the maintenance of small domains of facultative heterochromatin known as HOODs. The chain is Post-transcriptional regulator mkt1 from Schizosaccharomyces pombe (strain 972 / ATCC 24843) (Fission yeast).